Consider the following 893-residue polypeptide: UPF0182 protein CLB_0018 (893 aa).

7 consecutive transmembrane segments (helical) span residues 9 to 29 (IPLF…NFII), 49 to 69 (AIII…WMYY), 94 to 114 (LFFI…SSSY), 154 to 174 (VIIS…FILE), 202 to 222 (LAIV…IKIW), 246 to 266 (FYKI…LSIV), and 273 to 293 (VSIC…ASFL).

The protein belongs to the UPF0182 family.

It is found in the cell membrane. The chain is UPF0182 protein CLB_0018 from Clostridium botulinum (strain ATCC 19397 / Type A).